The sequence spans 37 residues: Brevinin-2DYe (37 aa).

Cysteine 31 and cysteine 37 are disulfide-bonded.

In terms of tissue distribution, expressed by the skin glands.

The protein resides in the secreted. In terms of biological role, antimicrobial peptide. Active against the Gram-positive bacterium S.aureus (MIC=15 uM) and the Gram-negative bacterium E.coli (MIC=30 uM). This Rana dybowskii (Dybovsky's frog) protein is Brevinin-2DYe.